A 104-amino-acid polypeptide reads, in one-letter code: Cytochrome c-551 (104 aa).

The first 22 residues, Met-1–Ala-22, serve as a signal peptide directing secretion. 4 residues coordinate heme c: Cys-34, Cys-37, His-38, and Met-83.

Post-translationally, binds 1 heme c group covalently per subunit.

The protein resides in the periplasm. Electron donor for cytochrome cd1 in nitrite and nitrate respiration. This is Cytochrome c-551 (nirM) from Pseudomonas aeruginosa (strain ATCC 15692 / DSM 22644 / CIP 104116 / JCM 14847 / LMG 12228 / 1C / PRS 101 / PAO1).